A 59-amino-acid polypeptide reads, in one-letter code: Cytochrome c oxidase subunit 7 (59 aa).

Over 1-24 the chain is Mitochondrial matrix; it reads MKNTIVQQQRFLQSIHKPTYLQRP. Residues 25 to 47 traverse the membrane as a helical segment; sequence GSFALVYPYYAVMAGLGLYSLYA. Topologically, residues 48 to 59 are mitochondrial intermembrane; sequence SGRVIFGKKDAF.

The protein belongs to the cytochrome c oxidase subunit 7 family. Component of the cytochrome c oxidase (complex IV, CIV), a multisubunit enzyme composed of a catalytic core of 3 subunits and several supernumerary subunits. The complex exists as a monomer or a dimer and forms supercomplexes (SCs) in the inner mitochondrial membrane with ubiquinol-cytochrome c oxidoreductase (cytochrome b-c1 complex, complex III, CIII).

The protein resides in the mitochondrion inner membrane. The protein operates within energy metabolism; oxidative phosphorylation. Functionally, component of the cytochrome c oxidase, the last enzyme in the mitochondrial electron transport chain which drives oxidative phosphorylation. The respiratory chain contains 3 multisubunit complexes succinate dehydrogenase (complex II, CII), ubiquinol-cytochrome c oxidoreductase (cytochrome b-c1 complex, complex III, CIII) and cytochrome c oxidase (complex IV, CIV), that cooperate to transfer electrons derived from NADH and succinate to molecular oxygen, creating an electrochemical gradient over the inner membrane that drives transmembrane transport and the ATP synthase. Cytochrome c oxidase is the component of the respiratory chain that catalyzes the reduction of oxygen to water. Electrons originating from reduced cytochrome c in the intermembrane space (IMS) are transferred via the dinuclear copper A center (CU(A)) of subunit 2 and heme A of subunit 1 to the active site in subunit 1, a binuclear center (BNC) formed by heme A3 and copper B (CU(B)). The BNC reduces molecular oxygen to 2 water molecules using 4 electrons from cytochrome c in the IMS and 4 protons from the mitochondrial matrix. The sequence is that of Cytochrome c oxidase subunit 7 (cox7) from Schizosaccharomyces pombe (strain 972 / ATCC 24843) (Fission yeast).